The primary structure comprises 1028 residues: Formin-like protein 3 (1028 aa).

Gly2 is lipidated: N-myristoyl glycine. Residues 26 to 472 (MPMPEPCELE…EAFQRRCHLE (447 aa)) enclose the GBD/FH3 domain. A Phosphothreonine modification is found at Thr95. Residue Ser174 is modified to Phosphoserine. Residues 493 to 541 (ELSEGMPPSDLDLLAPAPPPEEVLPLPPPPAPPLPPPPPPLPDKCPPAP) form a disordered region. The span at 508–541 (PAPPPEEVLPLPPPPAPPLPPPPPPLPDKCPPAP) shows a compositional bias: pro residues. The FH2 domain occupies 561-951 (IKKPIKTKFR…MREKQLAQEA (391 aa)). The 33-residue stretch at 986 to 1018 (YEGKDGTIEDIITVLKSVPFTARTAKRGSRFFC) folds into the DAD domain. Ser1014 is subject to Phosphoserine.

Belongs to the formin homology family. In terms of assembly, interacts with SRGAP2 (via SH3 domain). Expressed in endothelial cells.

Its subcellular location is the cytoplasm. It is found in the cell membrane. Its function is as follows. Plays a role in the regulation of cell morphology and cytoskeletal organization. Required in the control of cell shape and migration. Required for developmental angiogenesis. In this process, required for microtubule reorganization and for efficient endothelial cell elongation. In quiescent endothelial cells, triggers rearrangement of the actin cytoskeleton, but does not alter microtubule alignement. This Homo sapiens (Human) protein is Formin-like protein 3 (FMNL3).